We begin with the raw amino-acid sequence, 327 residues long: Phenylalanine--tRNA ligase alpha subunit (327 aa).

Position 252 (Glu252) interacts with Mg(2+).

It belongs to the class-II aminoacyl-tRNA synthetase family. Phe-tRNA synthetase alpha subunit type 1 subfamily. As to quaternary structure, tetramer of two alpha and two beta subunits. It depends on Mg(2+) as a cofactor.

The protein resides in the cytoplasm. The enzyme catalyses tRNA(Phe) + L-phenylalanine + ATP = L-phenylalanyl-tRNA(Phe) + AMP + diphosphate + H(+). The sequence is that of Phenylalanine--tRNA ligase alpha subunit from Serratia proteamaculans (strain 568).